We begin with the raw amino-acid sequence, 436 residues long: Bystin (436 aa).

T145 is modified (phosphothreonine). A phosphoserine mark is found at S148 and S152.

It belongs to the bystin family.

It localises to the nucleus. Its subcellular location is the nucleolus. Required for processing of 20S pre-rRNA precursor and biogenesis of 40S ribosomal subunits. This Drosophila melanogaster (Fruit fly) protein is Bystin (bys).